We begin with the raw amino-acid sequence, 160 residues long: UPF0260 protein Rleg2_0895 (160 aa).

It belongs to the UPF0260 family.

This chain is UPF0260 protein Rleg2_0895, found in Rhizobium leguminosarum bv. trifolii (strain WSM2304).